The sequence spans 354 residues: Peptide chain release factor 1 (354 aa).

Gln231 is subject to N5-methylglutamine. The span at 284–304 shows a compositional bias: basic and acidic residues; that stretch reads EALAKDRKEQVGSGDRSERIR. A disordered region spans residues 284–308; it reads EALAKDRKEQVGSGDRSERIRTYNF.

This sequence belongs to the prokaryotic/mitochondrial release factor family. In terms of processing, methylated by PrmC. Methylation increases the termination efficiency of RF1.

It is found in the cytoplasm. Peptide chain release factor 1 directs the termination of translation in response to the peptide chain termination codons UAG and UAA. The sequence is that of Peptide chain release factor 1 from Nitratiruptor sp. (strain SB155-2).